We begin with the raw amino-acid sequence, 294 residues long: 2-oxo-3-(phosphooxy)propyl 3-oxoalkanoate synthase (294 aa).

This sequence belongs to the AfsA family.

It carries out the reaction a medium-chain 3-oxoacyl-[ACP] + dihydroxyacetone phosphate = a (4-alkanoyl-5-oxo-2,5-dihydrofuran-3-yl)methyl phosphate + holo-[ACP] + H2O. Functionally, involved in the biosynthesis of virginiae butanolide (VB), a gamma-butyrolactone autoregulator that triggers the production of the streptogramin antibiotic virginiamycin. This is 2-oxo-3-(phosphooxy)propyl 3-oxoalkanoate synthase from Streptomyces virginiae (Streptomyces cinnamonensis).